Consider the following 454-residue polypeptide: tRNA modification GTPase MnmE (454 aa).

Positions 23, 80, and 120 each coordinate (6S)-5-formyl-5,6,7,8-tetrahydrofolate. The TrmE-type G domain occupies glycine 216–glycine 377. Asparagine 226 is a K(+) binding site. GTP contacts are provided by residues asparagine 226 to serine 231, threonine 245 to threonine 251, aspartate 270 to glycine 273, asparagine 335 to aspartate 338, and serine 358 to arginine 360. Serine 230 serves as a coordination point for Mg(2+). The K(+) site is built by threonine 245, isoleucine 247, and threonine 250. Mg(2+) is bound at residue threonine 251. Lysine 454 lines the (6S)-5-formyl-5,6,7,8-tetrahydrofolate pocket.

It belongs to the TRAFAC class TrmE-Era-EngA-EngB-Septin-like GTPase superfamily. TrmE GTPase family. Homodimer. Heterotetramer of two MnmE and two MnmG subunits. K(+) serves as cofactor.

It localises to the cytoplasm. Its function is as follows. Exhibits a very high intrinsic GTPase hydrolysis rate. Involved in the addition of a carboxymethylaminomethyl (cmnm) group at the wobble position (U34) of certain tRNAs, forming tRNA-cmnm(5)s(2)U34. In Klebsiella pneumoniae subsp. pneumoniae (strain ATCC 700721 / MGH 78578), this protein is tRNA modification GTPase MnmE.